Consider the following 281-residue polypeptide: UDP-N-acetylenolpyruvoylglucosamine reductase (281 aa).

An FAD-binding PCMH-type domain is found at 17-180 (VGGKAKKLII…LSATFKFDNG (164 aa)). The active site involves Arg159. Ser206 functions as the Proton donor in the catalytic mechanism. Glu276 is an active-site residue.

Belongs to the MurB family. The cofactor is FAD.

Its subcellular location is the cytoplasm. It carries out the reaction UDP-N-acetyl-alpha-D-muramate + NADP(+) = UDP-N-acetyl-3-O-(1-carboxyvinyl)-alpha-D-glucosamine + NADPH + H(+). It participates in cell wall biogenesis; peptidoglycan biosynthesis. Its function is as follows. Cell wall formation. This Fusobacterium nucleatum subsp. nucleatum (strain ATCC 25586 / DSM 15643 / BCRC 10681 / CIP 101130 / JCM 8532 / KCTC 2640 / LMG 13131 / VPI 4355) protein is UDP-N-acetylenolpyruvoylglucosamine reductase.